A 1007-amino-acid polypeptide reads, in one-letter code: SUPPRESSOR OF ABI3-5 (1007 aa).

Disordered stretches follow at residues 1-185 (MDPS…RDRE) and 204-269 (ESPH…FSAT). 4 stretches are compositionally biased toward basic and acidic residues: residues 40–49 (PDERLMRDDV), 94–120 (YYHDSEAGSRNGHYRDHEHERSSRYDG), 138–185 (HSRD…RDRE), and 204–214 (ESPHKRYEKSR). Positions 227-236 (RSPRGRSHGR) are enriched in basic residues. Residues 237 to 264 (SYREDSYEGDHWNESERRREYEDRHNQD) are compositionally biased toward basic and acidic residues. Residues 272–352 (ATVVVKGLSM…RKLMFHYSQP (81 aa)) enclose the RRM 1 domain. The segment at 378-407 (VPTDWICTICGCINFARRTSCFQCNEPKTK) adopts a RanBP2-type zinc-finger fold. Residues 432–512 (HVLVVRGLDE…KILRVAYAKS (81 aa)) enclose the RRM 2 domain. 6 disordered regions span residues 556 to 581 (GEKQNTGGQAQGVGEIESQKGTSAPQ), 631 to 656 (PDQNNESKVTENQPDSAKKEKSSQQK), 725 to 755 (HETQIQRPSPSLGDNPPTVSAEARSSFSTGQ), 771 to 797 (STSNHGVSALTTAESSSSSTTGGTLMG), 810 to 910 (ASSS…GITT), and 945 to 977 (SGLGKDGSGMKEPVQAQGVDRRAGLGSQQKKVD). Over residues 631-645 (PDQNNESKVTENQPD) the composition is skewed to polar residues. Composition is skewed to low complexity over residues 778-793 (SALTTAESSSSSTTGG) and 823-835 (PSASPASVSVSGS). Basic and acidic residues predominate over residues 849–867 (THREQPQTSYRDRAAERRN). A G-patch domain is found at 928 to 974 (ESNVGNRMLRNMGWHEGSGLGKDGSGMKEPVQAQGVDRRAGLGSQQK).

In terms of assembly, interacts with the pre-spliceosomal component U2AF65A. In terms of tissue distribution, ubiquitous with highest expression in siliques toward the end of seed maturation.

It localises to the nucleus. In terms of biological role, splicing factor that controls alternative splicing of the developmental regulator ABI3. Reduces splicing of a cryptic intron in ABI3, leading to a decreased in ABI3-beta transcript. Regulates the splicing of the receptor-like kinase SNC4/LRKL-2.6. This is SUPPRESSOR OF ABI3-5 from Arabidopsis thaliana (Mouse-ear cress).